A 155-amino-acid chain; its full sequence is Aspartate carbamoyltransferase regulatory chain (155 aa).

4 residues coordinate Zn(2+): Cys-109, Cys-114, Cys-138, and Cys-141.

It belongs to the PyrI family. In terms of assembly, contains catalytic and regulatory chains. Zn(2+) is required as a cofactor.

Its function is as follows. Involved in allosteric regulation of aspartate carbamoyltransferase. This Vibrio cholerae serotype O1 (strain ATCC 39315 / El Tor Inaba N16961) protein is Aspartate carbamoyltransferase regulatory chain.